The sequence spans 189 residues: Interferon alpha-5 (189 aa).

The signal sequence occupies residues 1-23 (MARLCAFLMVLPVLSYWPTCSLG). 2 disulfides stabilise this stretch: Cys24-Cys122 and Cys52-Cys162. N-linked (GlcNAc...) asparagine glycosylation occurs at Asn101.

The protein belongs to the alpha/beta interferon family.

Its subcellular location is the secreted. In terms of biological role, produced by macrophages, IFN-alpha have antiviral activities. Interferon stimulates the production of two enzymes: a protein kinase and an oligoadenylate synthetase. The protein is Interferon alpha-5 (Ifna5) of Mus musculus (Mouse).